Reading from the N-terminus, the 372-residue chain is NADH-quinone oxidoreductase subunit H (372 aa).

8 helical membrane passes run 34-54 (LPLGLLVIAAIPLVFIALYAL), 106-126 (FLFVIGPGVLFVGSFLAFAVL), 139-159 (VGLFYAIGIVALEVVGILAAG), 178-198 (IVSYEIPAAIALLCGAMMAGT), 217-237 (FFLFQSPIAWLPFLIYFIASL), 269-289 (VIFLAEYGSMFMVSAIIAIVF), 313-333 (VWGAFWIIMKGFFFIFVQMWL), and 352-372 (VLTPFAFVSFVLTAIWMIYVP).

It belongs to the complex I subunit 1 family. In terms of assembly, NDH-1 is composed of 14 different subunits. Subunits NuoA, H, J, K, L, M, N constitute the membrane sector of the complex.

It localises to the cell inner membrane. It carries out the reaction a quinone + NADH + 5 H(+)(in) = a quinol + NAD(+) + 4 H(+)(out). Its function is as follows. NDH-1 shuttles electrons from NADH, via FMN and iron-sulfur (Fe-S) centers, to quinones in the respiratory chain. The immediate electron acceptor for the enzyme in this species is believed to be ubiquinone. Couples the redox reaction to proton translocation (for every two electrons transferred, four hydrogen ions are translocated across the cytoplasmic membrane), and thus conserves the redox energy in a proton gradient. This subunit may bind ubiquinone. The protein is NADH-quinone oxidoreductase subunit H of Chlorobium luteolum (strain DSM 273 / BCRC 81028 / 2530) (Pelodictyon luteolum).